We begin with the raw amino-acid sequence, 271 residues long: MEAAAEPGNLAGVRHIILVLSGKGGVGKSTISTELALALRHAGKKVGILDVDLCGPSIPRMLGAQGRAVHQCDRGWAPVFLDREQSISLMSVGFLLEKPDEAVVWRGPKKNALIKQFVSDVAWGELDYLVVDTPPGTSDEHMATIEALRPYQPLGALVVTTPQAVSVGDVRRELTFCRKTGLRVMGIVENMSGFTCPHCTECTSVFSRGGGEELAQLAGVPFLGSVPLDPALMRTLEEGHDFIQEFPGSPAFAALTSIAQKILDATPACLP.

The residue at position 1 (Met-1) is an N-acetylmethionine. Residue 22 to 29 (GKGGVGKS) coordinates ATP. The [4Fe-4S] cluster site is built by Cys-196 and Cys-199.

This sequence belongs to the Mrp/NBP35 ATP-binding proteins family. NUBP2/CFD1 subfamily. In terms of assembly, heterotetramer of 2 NUBP1 and 2 NUBP2 chains. Interacts with KIFC1. Interacts with NUBP1. [4Fe-4S] cluster is required as a cofactor. As to expression, widely expressed with highest expression in skeletal muscle.

It is found in the nucleus. It localises to the cytoplasm. Its subcellular location is the cytoskeleton. The protein resides in the microtubule organizing center. The protein localises to the centrosome. It is found in the cilium axoneme. It localises to the centriole. Its function is as follows. Component of the cytosolic iron-sulfur (Fe/S) protein assembly (CIA) machinery. Required for maturation of extramitochondrial Fe-S proteins. The NUBP1-NUBP2 heterotetramer forms a Fe-S scaffold complex, mediating the de novo assembly of an Fe-S cluster and its transfer to target apoproteins. Negatively regulates cilium formation and structure. The polypeptide is Cytosolic Fe-S cluster assembly factor NUBP2 (Homo sapiens (Human)).